A 1098-amino-acid chain; its full sequence is Probable arabinosyltransferase B (1098 aa).

The next 12 helical transmembrane spans lie at Trp-28–Val-50, Leu-217–Leu-239, Ala-271–Ile-293, Leu-402–Ile-419, Ala-434–Val-456, Leu-472–Phe-494, Phe-541–Leu-558, Pro-570–Phe-587, Gly-597–Leu-619, Met-626–Tyr-648, Ile-663–Trp-685, and Leu-698–Ala-720.

The protein belongs to the emb family.

It localises to the cell membrane. Its function is as follows. Arabinosyl transferase responsible for the polymerization of arabinose into the arabinan of arabinogalactan. This Mycobacterium tuberculosis (strain CDC 1551 / Oshkosh) protein is Probable arabinosyltransferase B (embB).